The chain runs to 214 residues: Ornithine decarboxylase antizyme 1 (214 aa).

It belongs to the ODC antizyme family. As to quaternary structure, interacts with ODC1 and thereby sterically blocks ODC homodimerization.

Functionally, ornithine decarboxylase (ODC) antizyme protein that negatively regulates ODC activity and intracellular polyamine biosynthesis and uptake in response to increased intracellular polyamine levels. Binds to ODC monomers, inhibiting the assembly of the functional ODC homodimer, and targets the monomers for ubiquitin-independent proteolytic destruction by the 26S proteasome. This chain is Ornithine decarboxylase antizyme 1 (oaz1a), found in Danio rerio (Zebrafish).